We begin with the raw amino-acid sequence, 227 residues long: Cytochrome c oxidase subunit 2 (227 aa).

Residues 1–14 (MAHPAQLGFQDAAS) lie on the Mitochondrial intermembrane side of the membrane. The chain crosses the membrane as a helical span at residues 15–45 (PIMEELMYFHDHTLMIVFLISSLVLYIISLM). Residues 46–59 (LTTELTHTSTMDAQ) are Mitochondrial matrix-facing. A helical transmembrane segment spans residues 60-87 (EVETVWTILPAVILILIALPSLRILYMM). At 88 to 227 (DEITTPSLTL…HFEEWLLSTL (140 aa)) the chain is on the mitochondrial intermembrane side. Cu cation contacts are provided by His161, Cys196, Glu198, Cys200, His204, and Met207. Glu198 is a binding site for Mg(2+).

Belongs to the cytochrome c oxidase subunit 2 family. As to quaternary structure, component of the cytochrome c oxidase (complex IV, CIV), a multisubunit enzyme composed of 14 subunits. The complex is composed of a catalytic core of 3 subunits MT-CO1, MT-CO2 and MT-CO3, encoded in the mitochondrial DNA, and 11 supernumerary subunits COX4I, COX5A, COX5B, COX6A, COX6B, COX6C, COX7A, COX7B, COX7C, COX8 and NDUFA4, which are encoded in the nuclear genome. The complex exists as a monomer or a dimer and forms supercomplexes (SCs) in the inner mitochondrial membrane with NADH-ubiquinone oxidoreductase (complex I, CI) and ubiquinol-cytochrome c oxidoreductase (cytochrome b-c1 complex, complex III, CIII), resulting in different assemblies (supercomplex SCI(1)III(2)IV(1) and megacomplex MCI(2)III(2)IV(2)). Found in a complex with TMEM177, COA6, COX18, COX20, SCO1 and SCO2. Interacts with TMEM177 in a COX20-dependent manner. Interacts with COX20. Interacts with COX16. The cofactor is Cu cation.

It is found in the mitochondrion inner membrane. It catalyses the reaction 4 Fe(II)-[cytochrome c] + O2 + 8 H(+)(in) = 4 Fe(III)-[cytochrome c] + 2 H2O + 4 H(+)(out). Functionally, component of the cytochrome c oxidase, the last enzyme in the mitochondrial electron transport chain which drives oxidative phosphorylation. The respiratory chain contains 3 multisubunit complexes succinate dehydrogenase (complex II, CII), ubiquinol-cytochrome c oxidoreductase (cytochrome b-c1 complex, complex III, CIII) and cytochrome c oxidase (complex IV, CIV), that cooperate to transfer electrons derived from NADH and succinate to molecular oxygen, creating an electrochemical gradient over the inner membrane that drives transmembrane transport and the ATP synthase. Cytochrome c oxidase is the component of the respiratory chain that catalyzes the reduction of oxygen to water. Electrons originating from reduced cytochrome c in the intermembrane space (IMS) are transferred via the dinuclear copper A center (CU(A)) of subunit 2 and heme A of subunit 1 to the active site in subunit 1, a binuclear center (BNC) formed by heme A3 and copper B (CU(B)). The BNC reduces molecular oxygen to 2 water molecules using 4 electrons from cytochrome c in the IMS and 4 protons from the mitochondrial matrix. The chain is Cytochrome c oxidase subunit 2 (MT-CO2) from Microcebus tavaratra (Northern rufous mouse lemur).